The primary structure comprises 1463 residues: DNA polymerase III PolC-type (1463 aa).

Residues 425–581 (YVVFDVETTG…YDAEATGRLL (157 aa)) enclose the Exonuclease domain.

Belongs to the DNA polymerase type-C family. PolC subfamily.

The protein resides in the cytoplasm. It carries out the reaction DNA(n) + a 2'-deoxyribonucleoside 5'-triphosphate = DNA(n+1) + diphosphate. Its function is as follows. Required for replicative DNA synthesis. This DNA polymerase also exhibits 3' to 5' exonuclease activity. In Streptococcus pneumoniae serotype 4 (strain ATCC BAA-334 / TIGR4), this protein is DNA polymerase III PolC-type.